A 305-amino-acid polypeptide reads, in one-letter code: 4-diphosphocytidyl-2-C-methyl-D-erythritol kinase (305 aa).

The active site involves lysine 18. 103-113 (PYGAGLGGGSS) is a binding site for ATP. Aspartate 145 is a catalytic residue.

The protein belongs to the GHMP kinase family. IspE subfamily.

It catalyses the reaction 4-CDP-2-C-methyl-D-erythritol + ATP = 4-CDP-2-C-methyl-D-erythritol 2-phosphate + ADP + H(+). The protein operates within isoprenoid biosynthesis; isopentenyl diphosphate biosynthesis via DXP pathway; isopentenyl diphosphate from 1-deoxy-D-xylulose 5-phosphate: step 3/6. Catalyzes the phosphorylation of the position 2 hydroxy group of 4-diphosphocytidyl-2C-methyl-D-erythritol. This Lawsonia intracellularis (strain PHE/MN1-00) protein is 4-diphosphocytidyl-2-C-methyl-D-erythritol kinase.